The primary structure comprises 424 residues: Serine--tRNA ligase (424 aa).

L-serine is bound at residue 231 to 233; that stretch reads TAE. 261-263 provides a ligand contact to ATP; sequence RSE. Residue glutamate 284 participates in L-serine binding. 348-351 provides a ligand contact to ATP; it reads ETSS. L-serine is bound at residue serine 383.

Belongs to the class-II aminoacyl-tRNA synthetase family. Type-1 seryl-tRNA synthetase subfamily. As to quaternary structure, homodimer. The tRNA molecule binds across the dimer.

Its subcellular location is the cytoplasm. The catalysed reaction is tRNA(Ser) + L-serine + ATP = L-seryl-tRNA(Ser) + AMP + diphosphate + H(+). It carries out the reaction tRNA(Sec) + L-serine + ATP = L-seryl-tRNA(Sec) + AMP + diphosphate + H(+). The protein operates within aminoacyl-tRNA biosynthesis; selenocysteinyl-tRNA(Sec) biosynthesis; L-seryl-tRNA(Sec) from L-serine and tRNA(Sec): step 1/1. In terms of biological role, catalyzes the attachment of serine to tRNA(Ser). Is also able to aminoacylate tRNA(Sec) with serine, to form the misacylated tRNA L-seryl-tRNA(Sec), which will be further converted into selenocysteinyl-tRNA(Sec). This chain is Serine--tRNA ligase, found in Metamycoplasma arthritidis (strain 158L3-1) (Mycoplasma arthritidis).